A 353-amino-acid polypeptide reads, in one-letter code: Ubiquinol oxidase 1, mitochondrial (353 aa).

Residues 1–69 (MMTRGATRMT…RHFPVMGSRS (69 aa)) constitute a mitochondrion transit peptide. The interval 77–99 (DKQHDKKAENGSAAATGGGDGGD) is disordered. A helical membrane pass occupies residues 178–198 (AMMLETVAAVPGMVGGMLLHC). Positions 182, 221, and 224 each coordinate Fe cation. Residues 240-260 (ALVFAVQGVFFNAYFVTYLLS) traverse the membrane as a helical segment. Fe cation-binding residues include Glu-272, Glu-323, and His-326.

Belongs to the alternative oxidase family. As to quaternary structure, homodimer; disulfide-linked. It depends on Fe cation as a cofactor.

The protein localises to the mitochondrion inner membrane. The catalysed reaction is 2 a ubiquinol + O2 = 2 a ubiquinone + 2 H2O. With respect to regulation, stimulated by reduction of the disulfide bond and the presence of pyruvate. Functionally, catalyzes the cyanide-resistant oxidation of ubiquinol and the reduction of molecular oxygen to water, but does not translocate protons and consequently is not linked to oxidative phosphorylation. May increase respiration when the cytochrome respiratory pathway is restricted, or in response to low temperatures. The protein is Ubiquinol oxidase 1, mitochondrial (AOX1) of Nicotiana tabacum (Common tobacco).